Consider the following 911-residue polypeptide: MQMMTRKVLLNMELEEDDDEDGDIVLENFDQTIVCPTFGSLENQQDFRTPEFEEFNGKPDSLFFTDGQRRIDFILVYEDESKKENNKKGTNEKQKRKRQAYESNLICHGLQLEATRSVSDDKLVFVKVHAPWEVLCTYAEIMHIKLPLKPNDLKTRSPFGNLNWFTKVLRVNESVIKPEQEFFTAPFEKSRMNDFYILDRDSFFNPATRSRIVYFILSRVKYQVMNNVNKFGINRLVSSGIYKAAFPLHDCRFNYESEDISCPSERYLLYREWAHPRSIYKKQPLDLIRKYYGEKIGIYFAWLGYYTQMLLLAAVVGVACFLYGYLDQDNCTWSKEVCDPDIGGQILMCPQCDRLCPFWRLNITCESSKKLCIFDSFGTLIFAVFMGVWVTLFLEFWKRRQAELEYEWDTVELQQEEQARPEYEAQCNHVVINEITQEEERIPFTTCGKCIRVTLCASAVFFWILLIIASVIGIIVYRLSVFIVFSTTLPKNPNGTDPIQKYLTPQMATSITASIISFIIIMILNTIYEKVAIMITNFELPRTQTDYENSLTMKMFLFQFVNYYSSCFYIAFFKGKFVGYPGDPVYLLGKYRSEECDPGGCLLELTTQLTIIMGGKAIWNNIQEVLLPWVMNLIGRYKRVSGSEKITPRWEQDYHLQPMGKLGLFYEYLEMIIQFGFVTLFVASFPLAPLLALVNNILEIRVDAWKLTTQFRRMVPEKAQDIGAWQPIMQGIAILAVVTNAMIIAFTSDMIPRLVYYWSFSIPPYGDHTYYTMDGYINNTLSVFNITDFKNTDKENPYIGLGNYTLCRYRDFRNPPGHPQEYKHNIYYWHVIAAKLAFIIVMEHIIYSVKFFISYAIPDVSKITKSKIKREKYLTQKLLHESHLKDLTKNMGIIAERIGGTVDNSVRPKLE.

The Cytoplasmic portion of the chain corresponds to 1–301 (MQMMTRKVLL…YGEKIGIYFA (301 aa)). Residues 302 to 322 (WLGYYTQMLLLAAVVGVACFL) traverse the membrane as a helical segment. Residues 323 to 376 (YGYLDQDNCTWSKEVCDPDIGGQILMCPQCDRLCPFWRLNITCESSKKLCIFDS) lie on the Extracellular side of the membrane. Residue asparagine 330 is glycosylated (N-linked (GlcNAc...) asparagine). 5 disulfide bridges follow: cysteine 331-cysteine 372, cysteine 338-cysteine 365, cysteine 349-cysteine 807, cysteine 352-cysteine 356, and cysteine 596-cysteine 601. N-linked (GlcNAc...) asparagine glycosylation is present at asparagine 362. The chain crosses the membrane as a helical span at residues 377–397 (FGTLIFAVFMGVWVTLFLEFW). At 398 to 456 (KRRQAELEYEWDTVELQQEEQARPEYEAQCNHVVINEITQEEERIPFTTCGKCIRVTLC) the chain is on the cytoplasmic side. A helical transmembrane segment spans residues 457 to 477 (ASAVFFWILLIIASVIGIIVY). The Extracellular portion of the chain corresponds to 478 to 510 (RLSVFIVFSTTLPKNPNGTDPIQKYLTPQMATS). Residue asparagine 494 is glycosylated (N-linked (GlcNAc...) asparagine). A helical transmembrane segment spans residues 511–531 (ITASIISFIIIMILNTIYEKV). The Cytoplasmic portion of the chain corresponds to 532–552 (AIMITNFELPRTQTDYENSLT). Residues 553–573 (MKMFLFQFVNYYSSCFYIAFF) form a helical membrane-spanning segment. Topologically, residues 574 to 602 (KGKFVGYPGDPVYLLGKYRSEECDPGGCL) are extracellular. A helical membrane pass occupies residues 603-622 (LELTTQLTIIMGGKAIWNNI). Residues 623 to 664 (QEVLLPWVMNLIGRYKRVSGSEKITPRWEQDYHLQPMGKLGL) are Cytoplasmic-facing. Positions 624, 667, and 670 each coordinate Ca(2+). 2 helical membrane-spanning segments follow: residues 665–685 (FYEY…VASF) and 686–706 (PLAP…DAWK). At 707 to 723 (LTTQFRRMVPEKAQDIG) the chain is on the cytoplasmic side. The helical transmembrane segment at 724 to 744 (AWQPIMQGIAILAVVTNAMII) threads the bilayer. The Extracellular segment spans residues 745 to 837 (AFTSDMIPRL…YWHVIAAKLA (93 aa)). N-linked (GlcNAc...) asparagine glycosylation is found at asparagine 778, asparagine 785, and asparagine 803. A helical membrane pass occupies residues 838–858 (FIIVMEHIIYSVKFFISYAIP). Topologically, residues 859 to 911 (DVSKITKSKIKREKYLTQKLLHESHLKDLTKNMGIIAERIGGTVDNSVRPKLE) are cytoplasmic.

Belongs to the anoctamin family. As to quaternary structure, homodimer. In terms of tissue distribution, predominant expression seen in epithelial tissues. Also found in skeletal system where it is primarily expressed in osteoblasts.

It is found in the cell membrane. The enzyme catalyses a 1,2-diacyl-sn-glycero-3-phospho-L-serine(in) = a 1,2-diacyl-sn-glycero-3-phospho-L-serine(out). It carries out the reaction a beta-D-galactosyl-(1&lt;-&gt;1')-N-acylsphing-4-enine(out) = a beta-D-galactosyl-(1&lt;-&gt;1')-N-acylsphing-4-enine(in). The catalysed reaction is a 1,2-diacyl-sn-glycero-3-phosphocholine(in) = a 1,2-diacyl-sn-glycero-3-phosphocholine(out). With respect to regulation, exhibits synergistic gating by Ca(2+) and voltage. Inhibited by some non-specific cation channel blockers such as: ruthenium red, 2-aminoethyl diphenylborinate (2APB), gadolinium and cadmium ions. Functionally, small-conductance calcium-activated nonselective cation (SCAN) channel which acts as a regulator of phospholipid scrambling in platelets, osteoblasts and fetal thymocytes. Phospholipid scrambling results in surface exposure of phosphatidylserine which in platelets is essential to trigger the clotting system whereas in osteoblasts is essential for the deposition of hydroxyapatite during bone mineralization. Has calcium-dependent phospholipid scramblase activity; scrambles phosphatidylserine, phosphatidylcholine and galactosylceramide. Can generate outwardly rectifying chloride channel currents in airway epithelial cells and Jurkat T lymphocytes. The polypeptide is Anoctamin-6 (Ano6) (Mus musculus (Mouse)).